The sequence spans 416 residues: 3-phosphoshikimate 1-carboxyvinyltransferase (416 aa).

3 residues coordinate 3-phosphoshikimate: Lys-20, Ser-21, and Arg-25. Residue Lys-20 participates in phosphoenolpyruvate binding. Phosphoenolpyruvate is bound by residues Gly-88 and Arg-116. 3-phosphoshikimate is bound by residues Ser-159, Ser-160, Gln-161, Ser-186, Asp-300, and Lys-327. Gln-161 is a binding site for phosphoenolpyruvate. Asp-300 (proton acceptor) is an active-site residue. Residues Arg-331 and Arg-373 each contribute to the phosphoenolpyruvate site.

The protein belongs to the EPSP synthase family. In terms of assembly, monomer.

Its subcellular location is the cytoplasm. It carries out the reaction 3-phosphoshikimate + phosphoenolpyruvate = 5-O-(1-carboxyvinyl)-3-phosphoshikimate + phosphate. It participates in metabolic intermediate biosynthesis; chorismate biosynthesis. In terms of biological role, catalyzes the transfer of the enolpyruvyl moiety of phosphoenolpyruvate (PEP) to the 5-hydroxyl of shikimate-3-phosphate (S3P) to produce enolpyruvyl shikimate-3-phosphate and inorganic phosphate. In Archaeoglobus fulgidus (strain ATCC 49558 / DSM 4304 / JCM 9628 / NBRC 100126 / VC-16), this protein is 3-phosphoshikimate 1-carboxyvinyltransferase.